A 312-amino-acid chain; its full sequence is Polyhedral envelope protein (312 aa).

This sequence belongs to the baculoviridae PE family.

Its subcellular location is the virion membrane. Functionally, major component of the polyhedra envelope. The chain is Polyhedral envelope protein from Lymantria dispar multicapsid nuclear polyhedrosis virus (LdMNPV).